The following is a 387-amino-acid chain: Tetratricopeptide repeat protein 4 (387 aa).

An N-acetylmethionine modification is found at Met1. A phosphoserine mark is found at Ser47 and Ser51. 3 TPR repeats span residues Ala79–Asp112, Ala117–His150, and Leu151–Glu184. Phosphoserine is present on Ser243.

It belongs to the TTC4 family. As to quaternary structure, interacts (via TPR repeats) with HSP90AB1. Interacts with HSPA8 and CDC6. Interacts with TBK1. Interacts with MSL1. As to expression, highly expressed in proliferating tissue and tumor cell lines but not in normal cell lines.

Its subcellular location is the nucleus. It is found in the nucleoplasm. It localises to the cytoplasm. May act as a co-chaperone for HSP90AB1. Promotes Sendai virus (SeV)-induced host cell innate immune responses. The polypeptide is Tetratricopeptide repeat protein 4 (TTC4) (Homo sapiens (Human)).